Here is a 457-residue protein sequence, read N- to C-terminus: UDP-N-acetylmuramate--L-alanine ligase (457 aa).

Residue G109–T115 coordinates ATP.

Belongs to the MurCDEF family.

It is found in the cytoplasm. The catalysed reaction is UDP-N-acetyl-alpha-D-muramate + L-alanine + ATP = UDP-N-acetyl-alpha-D-muramoyl-L-alanine + ADP + phosphate + H(+). Its pathway is cell wall biogenesis; peptidoglycan biosynthesis. In terms of biological role, cell wall formation. The polypeptide is UDP-N-acetylmuramate--L-alanine ligase (Thermotoga petrophila (strain ATCC BAA-488 / DSM 13995 / JCM 10881 / RKU-1)).